We begin with the raw amino-acid sequence, 173 residues long: Peptidyl-prolyl cis-trans isomerase cyp3 (173 aa).

A PPIase cyclophilin-type domain is found at F8 to E172.

This sequence belongs to the cyclophilin-type PPIase family. PPIase H subfamily.

It localises to the cytoplasm. The protein localises to the cytoskeleton. Its subcellular location is the microtubule organizing center. The protein resides in the spindle pole body. The catalysed reaction is [protein]-peptidylproline (omega=180) = [protein]-peptidylproline (omega=0). In terms of biological role, PPIases accelerate the folding of proteins. It catalyzes the cis-trans isomerization of proline imidic peptide bonds in oligopeptides. This Schizosaccharomyces pombe (strain 972 / ATCC 24843) (Fission yeast) protein is Peptidyl-prolyl cis-trans isomerase cyp3 (cyp3).